Reading from the N-terminus, the 653-residue chain is Probable potassium transport system protein Kup (653 aa).

12 helical membrane passes run 37–57 (ALLALGALGIVYGDIGTSPLY), 79–99 (VLSLIFWSLIIVVSVKYLLLV), 134–154 (ITLGIFGAALLYGDGIITPAI), 168–188 (AVFDPYVIPIALVILVALFLV), 196–216 (IGAVFGPVMCIWFLTLAGLGV), 243–263 (LHGFLVLGGVFLVVTGCEALY), 278–298 (WFSMVLPALMLNYLGQGALLL), 320–340 (LVALATVAGVIASQALIAGVF), 368–388 (IYLPGLNWALLVGVVALVLGF), 397–417 (AYGIAVSTAMVITTLMAYVVA), 426–446 (WVAIPVVGLFLSVELAFFGAN), and 450–470 (VADGGWFPLLMAVVVFTLMTT).

It belongs to the HAK/KUP transporter (TC 2.A.72) family.

The protein localises to the cell inner membrane. It catalyses the reaction K(+)(in) + H(+)(in) = K(+)(out) + H(+)(out). Functionally, transport of potassium into the cell. Likely operates as a K(+):H(+) symporter. The chain is Probable potassium transport system protein Kup from Myxococcus xanthus (strain DK1622).